Here is a 114-residue protein sequence, read N- to C-terminus: Hydrogenase maturation factor HypA (114 aa).

Ni(2+) is bound at residue His-2. Residues Cys-70, Cys-73, Cys-86, and Cys-89 each contribute to the Zn(2+) site.

Belongs to the HypA/HybF family.

In terms of biological role, involved in the maturation of [NiFe] hydrogenases. Required for nickel insertion into the metal center of the hydrogenase. The sequence is that of Hydrogenase maturation factor HypA from Rippkaea orientalis (strain PCC 8801 / RF-1) (Cyanothece sp. (strain PCC 8801)).